The following is a 187-amino-acid chain: Elongation factor P (187 aa).

Belongs to the elongation factor P family.

The protein localises to the cytoplasm. The protein operates within protein biosynthesis; polypeptide chain elongation. Its function is as follows. Involved in peptide bond synthesis. Stimulates efficient translation and peptide-bond synthesis on native or reconstituted 70S ribosomes in vitro. Probably functions indirectly by altering the affinity of the ribosome for aminoacyl-tRNA, thus increasing their reactivity as acceptors for peptidyl transferase. The protein is Elongation factor P of Parasynechococcus marenigrum (strain WH8102).